We begin with the raw amino-acid sequence, 643 residues long: Alpha-dioxygenase PIOX (643 aa).

Histidine 167 (proton acceptor) is an active-site residue. Aspartate 168 contributes to the Ca(2+) binding site. Residue histidine 172 participates in heme b binding. Positions 220, 222, 224, and 226 each coordinate Ca(2+). Residues histidine 392, arginine 489, and arginine 493 each contribute to the heme b site.

This sequence belongs to the peroxidase family. Heme b serves as cofactor. It depends on Ca(2+) as a cofactor.

The catalysed reaction is a 1,2-saturated fatty acid + O2 = a (2R)-2-hydroperoxy fatty acid. It carries out the reaction (9Z,12Z,15Z)-octadecatrienoate + O2 = (R)-2-hydroperoxy-(9Z,12Z,15Z)-octadecatrienoate. The enzyme catalyses (9Z,12Z)-octadecadienoate + O2 = (2R,9Z,12Z)-2-hydroperoxyoctadecadienoate. Alpha-dioxygenase that catalyzes the primary oxygenation step of a variety of 14-20 carbon fatty acids, containing up to three unsaturated bonds, into their corresponding 2R-hydroperoxides. Involved in the production of oxylipins that function in cell signaling, wound healing, and protection from infection. In Nicotiana tabacum (Common tobacco), this protein is Alpha-dioxygenase PIOX.